We begin with the raw amino-acid sequence, 274 residues long: Ommochrome-binding protein (274 aa).

Positions 1 to 18 (MKLLILTICALHVNQMMA) are cleaved as a signal peptide. A glycan (N-linked (GlcNAc...) asparagine) is linked at asparagine 183.

As to quaternary structure, monomer. Present in larval hemolymph and synthesized by the fat body.

In terms of biological role, binds to an ommochrome, ommatin D which is a yellow chromophore. May be involved in guiding the chromophore through the hemolymph from the epidermis to the gut. The polypeptide is Ommochrome-binding protein (Manduca sexta (Tobacco hawkmoth)).